The sequence spans 427 residues: GTPase Obg (427 aa).

The region spanning 1–158 (MFVDQVKIYV…RDVTLELKVL (158 aa)) is the Obg domain. An OBG-type G domain is found at 159-329 (ADVGLVGFPS…LLFEVANLLE (171 aa)). GTP is bound by residues 165 to 172 (GFPSVGKS), 190 to 194 (FTTIV), 212 to 215 (DLPG), 282 to 285 (NKMD), and 310 to 312 (SAV). Mg(2+) is bound by residues Ser-172 and Thr-192. Positions 349-427 (YKFESESNFE…ILEYQFEFID (79 aa)) constitute an OCT domain.

The protein belongs to the TRAFAC class OBG-HflX-like GTPase superfamily. OBG GTPase family. Monomer. It depends on Mg(2+) as a cofactor.

The protein resides in the cytoplasm. Its function is as follows. An essential GTPase which binds GTP, GDP and possibly (p)ppGpp with moderate affinity, with high nucleotide exchange rates and a fairly low GTP hydrolysis rate. Plays a role in control of the cell cycle, stress response, ribosome biogenesis and in those bacteria that undergo differentiation, in morphogenesis control. This is GTPase Obg from Bacillus mycoides (strain KBAB4) (Bacillus weihenstephanensis).